A 428-amino-acid polypeptide reads, in one-letter code: Lupus La protein homolog A (428 aa).

Residues 7–99 (KEQKLDSDTK…RRSPAKPLPE (93 aa)) form the HTH La-type RNA-binding domain. In terms of domain architecture, RRM spans 111–203 (KSVYIKGFPT…EERKLNKSEE (93 aa)). Disordered stretches follow at residues 187-223 (EYHA…DAER) and 323-428 (QESF…VGDQ). 2 short sequence motifs (nuclear localization signal) span residues 196-212 (RKLN…QVKK) and 316-332 (KKIL…RKGR). The 123-residue stretch at 227–349 (EERVGSLLKF…KGRGGKGNDS (123 aa)) folds into the xRRM domain. 2 stretches are compositionally biased toward basic residues: residues 328–343 (KRKG…KGRG) and 352–361 (RKRTQFQGKK). Residues 366–377 (SSDDEDDMEESE) are compositionally biased toward acidic residues. A compositionally biased stretch (basic and acidic residues) spans 406–428 (RSLDDKAEDGPAVKQSKTEVGDQ).

Phosphorylated.

The protein resides in the nucleus. Its function is as follows. La protein plays a role in the transcription of RNA polymerase III. It is most probably a transcription termination factor. Binds to the 3' termini of virtually all nascent polymerase III transcripts. This Xenopus laevis (African clawed frog) protein is Lupus La protein homolog A (ssb-a).